The primary structure comprises 149 residues: Nucleoside diphosphate kinase (149 aa).

The ATP site is built by Lys-9, Phe-57, Arg-85, Thr-91, Arg-102, and Asn-112. The Pros-phosphohistidine intermediate role is filled by His-115.

Belongs to the NDK family. In terms of assembly, homotetramer. Mg(2+) serves as cofactor.

It localises to the cytoplasm. The catalysed reaction is a 2'-deoxyribonucleoside 5'-diphosphate + ATP = a 2'-deoxyribonucleoside 5'-triphosphate + ADP. The enzyme catalyses a ribonucleoside 5'-diphosphate + ATP = a ribonucleoside 5'-triphosphate + ADP. Major role in the synthesis of nucleoside triphosphates other than ATP. The ATP gamma phosphate is transferred to the NDP beta phosphate via a ping-pong mechanism, using a phosphorylated active-site intermediate. The protein is Nucleoside diphosphate kinase of Gloeobacter violaceus (strain ATCC 29082 / PCC 7421).